The following is a 253-amino-acid chain: 5'-nucleotidase SurE (253 aa).

D8, D9, S40, and N93 together coordinate a divalent metal cation.

It belongs to the SurE nucleotidase family. Requires a divalent metal cation as cofactor.

It localises to the cytoplasm. The enzyme catalyses a ribonucleoside 5'-phosphate + H2O = a ribonucleoside + phosphate. In terms of biological role, nucleotidase that shows phosphatase activity on nucleoside 5'-monophosphates. The sequence is that of 5'-nucleotidase SurE from Methylobacterium nodulans (strain LMG 21967 / CNCM I-2342 / ORS 2060).